The following is a 386-amino-acid chain: Probable mannan endo-1,4-beta-mannosidase A (386 aa).

The first 21 residues, 1–21, serve as a signal peptide directing secretion; that stretch reads MKLNPSLLTAAGLVSAQLASA. Substrate contacts are provided by tryptophan 95 and asparagine 207. Glutamate 208 serves as the catalytic Proton donor. Tyrosine 283 lines the substrate pocket. The active-site Nucleophile is the glutamate 316. N-linked (GlcNAc...) asparagine glycosylation occurs at asparagine 336. Residue tryptophan 346 coordinates substrate.

This sequence belongs to the glycosyl hydrolase 5 (cellulase A) family.

Its subcellular location is the secreted. The catalysed reaction is Random hydrolysis of (1-&gt;4)-beta-D-mannosidic linkages in mannans, galactomannans and glucomannans.. Functionally, endo-1,4-mannanase, a crucial enzyme for depolymerization of seed galactomannans and wood galactoglucomannans. This Aspergillus oryzae (strain ATCC 42149 / RIB 40) (Yellow koji mold) protein is Probable mannan endo-1,4-beta-mannosidase A (manA).